A 146-amino-acid chain; its full sequence is MPYTDVVIHEIQRLVDIVPMGVPHNIIQDTQFRGYLLPKGTDVFPLLGSVLKDPKYFRYPDAFYPQHFLDEQGRFKKNEAFVPFSSGKRICLGEAMARMELFLYFTSTLQNFSLCSLVPLVDIDITPKLSGFGNITPTYELCLVAR.

Cys-91 is a heme binding site.

The protein belongs to the cytochrome P450 family. Heme is required as a cofactor.

The chain is Putative inactive cytochrome P450 2G1 (CYP2G1P) from Homo sapiens (Human).